The following is a 95-amino-acid chain: Protein translocase subunit SecE (95 aa).

The disordered stretch occupies residues 1–35 (MTDAVGSIDMPDAEDEAPESKKKSRKGGKRGKKGP). Positions 22–35 (KKSRKGGKRGKKGP) are enriched in basic residues. The chain crosses the membrane as a helical span at residues 67-87 (VVIVFVVVMIGLVTVLDIGFA).

This sequence belongs to the SecE/SEC61-gamma family. As to quaternary structure, component of the Sec protein translocase complex. Heterotrimer consisting of SecY, SecE and SecG subunits. The heterotrimers can form oligomers, although 1 heterotrimer is thought to be able to translocate proteins. Interacts with the ribosome. Interacts with SecDF, and other proteins may be involved. Interacts with SecA.

The protein resides in the cell membrane. Its function is as follows. Essential subunit of the Sec protein translocation channel SecYEG. Clamps together the 2 halves of SecY. May contact the channel plug during translocation. The chain is Protein translocase subunit SecE from Streptomyces griseus.